The sequence spans 268 residues: Malonyl-[acyl-carrier protein] O-methyltransferase 1 (268 aa).

Belongs to the methyltransferase superfamily.

The enzyme catalyses malonyl-[ACP] + S-adenosyl-L-methionine = malonyl-[ACP] methyl ester + S-adenosyl-L-homocysteine. Its pathway is cofactor biosynthesis; biotin biosynthesis. Its function is as follows. Converts the free carboxyl group of a malonyl-thioester to its methyl ester by transfer of a methyl group from S-adenosyl-L-methionine (SAM). It allows to synthesize pimeloyl-ACP via the fatty acid synthetic pathway. The chain is Malonyl-[acyl-carrier protein] O-methyltransferase 1 from Ilyobacter polytropus (strain ATCC 51220 / DSM 2926 / LMG 16218 / CuHBu1).